The sequence spans 138 residues: Cysteine desulfuration protein SufE (138 aa).

C51 acts as the Cysteine persulfide intermediate in catalysis.

Belongs to the SufE family. Homodimer. Interacts with SufS.

The protein resides in the cytoplasm. It participates in cofactor biosynthesis; iron-sulfur cluster biosynthesis. Functionally, participates in cysteine desulfuration mediated by SufS. Cysteine desulfuration mobilizes sulfur from L-cysteine to yield L-alanine and constitutes an essential step in sulfur metabolism for biosynthesis of a variety of sulfur-containing biomolecules. Functions as a sulfur acceptor for SufS, by mediating the direct transfer of the sulfur atom from the S-sulfanylcysteine of SufS, an intermediate product of cysteine desulfuration process. In Escherichia coli O45:K1 (strain S88 / ExPEC), this protein is Cysteine desulfuration protein SufE.